The primary structure comprises 125 residues: Small ribosomal subunit protein uS13 (125 aa).

Positions Gly-95–Lys-125 are disordered.

The protein belongs to the universal ribosomal protein uS13 family. Part of the 30S ribosomal subunit. Forms a loose heterodimer with protein S19. Forms two bridges to the 50S subunit in the 70S ribosome.

Located at the top of the head of the 30S subunit, it contacts several helices of the 16S rRNA. In the 70S ribosome it contacts the 23S rRNA (bridge B1a) and protein L5 of the 50S subunit (bridge B1b), connecting the 2 subunits; these bridges are implicated in subunit movement. Contacts the tRNAs in the A and P-sites. The chain is Small ribosomal subunit protein uS13 from Cytophaga hutchinsonii (strain ATCC 33406 / DSM 1761 / CIP 103989 / NBRC 15051 / NCIMB 9469 / D465).